The primary structure comprises 389 residues: tRNA-specific 2-thiouridylase MnmA (389 aa).

ATP contacts are provided by residues 21–28 (AMSGGVDS) and L47. Residue C115 is the Nucleophile of the active site. An intrachain disulfide couples C115 to C212. G139 is a binding site for ATP. The interaction with tRNA stretch occupies residues 162-164 (RDQ). C212 functions as the Cysteine persulfide intermediate in the catalytic mechanism.

Belongs to the MnmA/TRMU family.

It is found in the cytoplasm. The enzyme catalyses S-sulfanyl-L-cysteinyl-[protein] + uridine(34) in tRNA + AH2 + ATP = 2-thiouridine(34) in tRNA + L-cysteinyl-[protein] + A + AMP + diphosphate + H(+). In terms of biological role, catalyzes the 2-thiolation of uridine at the wobble position (U34) of tRNA, leading to the formation of s(2)U34. The protein is tRNA-specific 2-thiouridylase MnmA of Xanthobacter autotrophicus (strain ATCC BAA-1158 / Py2).